A 978-amino-acid polypeptide reads, in one-letter code: Copper-transporting ATPase HMA4 (978 aa).

A compositionally biased stretch (basic and acidic residues) spans 1–11 (MEQNGENHLKD). The disordered stretch occupies residues 1–35 (MEQNGENHLKDPLLQADGGGSGASPAGASPRKERK). 3 HMA domains span residues 37–103 (RKVM…FEVD), 111–177 (AVCR…FGAD), and 186–252 (NKVH…QPPK). Residues Cys48, Cys51, Cys122, and Cys125 each contribute to the Cu(+) site. Helical transmembrane passes span 280–300 (FLWS…LPMI), 315–335 (MTIG…IIGW), 352–372 (MDVL…YIVL), 385–405 (FFET…LEVV), 545–565 (FFVP…FVAG), 584–604 (LALQ…LGLA), 907–927 (VWAL…LFPF), and 935–955 (WLAG…SLLL).

Belongs to the cation transport ATPase (P-type) (TC 3.A.3) family. Type IB subfamily. In terms of tissue distribution, highly expressed in roots. Expressed in vascular tissues of the stele, mainly in pericycle cells.

The protein localises to the vacuole membrane. It catalyses the reaction Cu(+)(in) + ATP + H2O = Cu(+)(out) + ADP + phosphate + H(+). In terms of biological role, copper (Cu) transporter that mediates Cu transport in root vacuoles. Involved in Cu detoxification by sequestrating Cu into root vacuoles and limiting translocation of Cu from the roots to the shoots, and accumulation in grains. The chain is Copper-transporting ATPase HMA4 from Oryza sativa subsp. japonica (Rice).